We begin with the raw amino-acid sequence, 238 residues long: Ribonuclease PH (238 aa).

Phosphate-binding positions include arginine 86 and 124–126; that span reads GTR.

It belongs to the RNase PH family. In terms of assembly, homohexameric ring arranged as a trimer of dimers.

The enzyme catalyses tRNA(n+1) + phosphate = tRNA(n) + a ribonucleoside 5'-diphosphate. Its function is as follows. Phosphorolytic 3'-5' exoribonuclease that plays an important role in tRNA 3'-end maturation. Removes nucleotide residues following the 3'-CCA terminus of tRNAs; can also add nucleotides to the ends of RNA molecules by using nucleoside diphosphates as substrates, but this may not be physiologically important. Probably plays a role in initiation of 16S rRNA degradation (leading to ribosome degradation) during starvation. The sequence is that of Ribonuclease PH from Yersinia enterocolitica serotype O:8 / biotype 1B (strain NCTC 13174 / 8081).